The sequence spans 81 residues: Small ribosomal subunit protein bS16c (81 aa).

It belongs to the bacterial ribosomal protein bS16 family.

It localises to the plastid. The protein localises to the chloroplast. The protein is Small ribosomal subunit protein bS16c of Emiliania huxleyi (Coccolithophore).